Reading from the N-terminus, the 174-residue chain is Ribosome maturation factor RimM (174 aa).

Positions Asp91–Leu164 constitute a PRC barrel domain.

This sequence belongs to the RimM family. In terms of assembly, binds ribosomal protein uS19.

The protein resides in the cytoplasm. An accessory protein needed during the final step in the assembly of 30S ribosomal subunit, possibly for assembly of the head region. Essential for efficient processing of 16S rRNA. May be needed both before and after RbfA during the maturation of 16S rRNA. It has affinity for free ribosomal 30S subunits but not for 70S ribosomes. The protein is Ribosome maturation factor RimM of Kineococcus radiotolerans (strain ATCC BAA-149 / DSM 14245 / SRS30216).